A 297-amino-acid polypeptide reads, in one-letter code: Coiled-coil domain-containing protein 159 (297 aa).

The stretch at 147 to 297 (EELELVREEV…SKSGRSFPPA (151 aa)) forms a coiled coil. Positions 256-297 (LRGHKGHQCLSPPLPSWDSDSDCDQDLSQPPFSKSGRSFPPA) are disordered.

Interacts with DYNLT2. Interacts with GGNBP1. Interacts with OSBP2.

Functionally, functions during spermatid development; may participate in the centrosome reduction procedure of spermatids and is required for the formation of the connecting piece/sperm head-tail coupling apparatus (HTCA) and the correct and tight attachment of the flagellum to the nuclear envelope. In Homo sapiens (Human), this protein is Coiled-coil domain-containing protein 159 (CCDC159).